Consider the following 991-residue polypeptide: Antigenic heat-stable 120 kDa protein (991 aa).

Disordered regions lie at residues 1 to 37 (DTSE…TPAL), 54 to 73 (TPSM…TSDP), and 348 to 384 (GQSK…TNQP). Residues 12–29 (EYTEEQKQTEEQEQKEFL) are compositionally biased toward basic and acidic residues. Positions 348-373 (GQSKEQPLITPQQTTSSSVEPPQYKQ) are enriched in polar residues.

The protein localises to the cytoplasm. In Rickettsia sibirica, this protein is Antigenic heat-stable 120 kDa protein (sca4).